A 245-amino-acid chain; its full sequence is Ureidoacrylate amidohydrolase RutB (245 aa).

D38 acts as the Proton acceptor in catalysis. K147 is an active-site residue. Residue C180 is the Nucleophile of the active site.

It belongs to the isochorismatase family. RutB subfamily.

It carries out the reaction (Z)-3-ureidoacrylate + H2O + H(+) = (Z)-3-aminoacrylate + NH4(+) + CO2. It catalyses the reaction (Z)-3-ureidoacrylate + H2O = (Z)-3-aminoacrylate + carbamate + H(+). The enzyme catalyses (Z)-2-methylureidoacrylate + H2O + H(+) = (Z)-2-methylaminoacrylate + NH4(+) + CO2. Its function is as follows. Hydrolyzes ureidoacrylate to form aminoacrylate and carbamate. The carbamate hydrolyzes spontaneously, thereby releasing one of the nitrogen atoms of the pyrimidine ring as ammonia and one of its carbon atoms as CO2. In Acinetobacter baylyi (strain ATCC 33305 / BD413 / ADP1), this protein is Ureidoacrylate amidohydrolase RutB.